We begin with the raw amino-acid sequence, 218 residues long: Outer-membrane lipoprotein LolB (218 aa).

The signal sequence occupies residues 1-24 (MNNLSYLTKIPLIWVLLSVTLLSA). Cys25 carries N-palmitoyl cysteine lipidation. The S-diacylglycerol cysteine moiety is linked to residue Cys25.

Belongs to the LolB family. In terms of assembly, monomer.

It localises to the cell outer membrane. Its function is as follows. Plays a critical role in the incorporation of lipoproteins in the outer membrane after they are released by the LolA protein. The protein is Outer-membrane lipoprotein LolB of Shewanella sediminis (strain HAW-EB3).